Here is a 115-residue protein sequence, read N- to C-terminus: Probable 4-amino-4-deoxy-L-arabinose-phosphoundecaprenol flippase subunit ArnE (115 aa).

The next 3 helical transmembrane spans lie at 42–62 (PWPW…LLLL), 65–85 (VEVG…TLVA), and 93–112 (VDRR…ALLG). In terms of domain architecture, EamA spans 46 to 113 (LALLALGLGL…IVAGVALLGR (68 aa)).

The protein belongs to the ArnE family. In terms of assembly, heterodimer of ArnE and ArnF.

Its subcellular location is the cell inner membrane. It participates in bacterial outer membrane biogenesis; lipopolysaccharide biosynthesis. Translocates 4-amino-4-deoxy-L-arabinose-phosphoundecaprenol (alpha-L-Ara4N-phosphoundecaprenol) from the cytoplasmic to the periplasmic side of the inner membrane. The protein is Probable 4-amino-4-deoxy-L-arabinose-phosphoundecaprenol flippase subunit ArnE of Pseudomonas paraeruginosa (strain DSM 24068 / PA7) (Pseudomonas aeruginosa (strain PA7)).